The following is a 258-amino-acid chain: Thiazole synthase (258 aa).

Lysine 100 serves as the catalytic Schiff-base intermediate with DXP. 1-deoxy-D-xylulose 5-phosphate contacts are provided by residues glycine 161, 187-188 (AG), and 209-210 (NT).

The protein belongs to the ThiG family. In terms of assembly, homotetramer. Forms heterodimers with either ThiH or ThiS.

The protein resides in the cytoplasm. It carries out the reaction [ThiS sulfur-carrier protein]-C-terminal-Gly-aminoethanethioate + 2-iminoacetate + 1-deoxy-D-xylulose 5-phosphate = [ThiS sulfur-carrier protein]-C-terminal Gly-Gly + 2-[(2R,5Z)-2-carboxy-4-methylthiazol-5(2H)-ylidene]ethyl phosphate + 2 H2O + H(+). It functions in the pathway cofactor biosynthesis; thiamine diphosphate biosynthesis. In terms of biological role, catalyzes the rearrangement of 1-deoxy-D-xylulose 5-phosphate (DXP) to produce the thiazole phosphate moiety of thiamine. Sulfur is provided by the thiocarboxylate moiety of the carrier protein ThiS. In vitro, sulfur can be provided by H(2)S. This chain is Thiazole synthase, found in Campylobacter jejuni subsp. jejuni serotype O:23/36 (strain 81-176).